A 602-amino-acid polypeptide reads, in one-letter code: Probable HECT-type ubiquitin ligase-interacting protein creD (602 aa).

Disordered regions lie at residues E375 to S398 and T457 to P499. The span at P463–P475 shows a compositional bias: low complexity. Over residues L477–I492 the composition is skewed to basic and acidic residues.

The protein belongs to the arrestin family. Interacts with hulA.

Component of the regulatory network controlling carbon source utilization through ubiquitination and deubiquitination involving creA, creB, creC, creD and acrB. May be involved in signaling by recognizing appropriately phosphorylated substrates via its arrestin domains and then recruit a HECT-type ubiquitin ligase such as hulA, leading to ubiquitination of the substrate, providing a link between ubiquitination and phosphorylation in protein regulation and stability. The chain is Probable HECT-type ubiquitin ligase-interacting protein creD (creD) from Aspergillus clavatus (strain ATCC 1007 / CBS 513.65 / DSM 816 / NCTC 3887 / NRRL 1 / QM 1276 / 107).